Reading from the N-terminus, the 3027-residue chain is DmX-like protein 1 (3027 aa).

3 WD repeats span residues 108–145, 166–206, and 229–277; these read FLES…KPTE, KTAS…RTAV, and AHPR…NDCL. Serine 324, serine 422, serine 425, and serine 436 each carry phosphoserine. Over residues 420–433 the composition is skewed to polar residues; that stretch reads PSSEASVEDSNQAD. The segment at 420 to 450 is disordered; the sequence is PSSEASVEDSNQADVKSDEETDDGVDDLKIN. One copy of the WD 4 repeat lies at 476 to 516; that stretch reads DHQIEVLLSEWSKNADMLFSIHPMDGSLLVWHVDWLDEYQP. Positions 563-584 are disordered; that stretch reads KQKPSGLTRSTSMLISSGHNKS. Serine 574 is modified (phosphoserine). WD repeat units lie at residues 580–621, 628–665, and 848–895; these read GHNK…ESAF, SHKS…RTPD, and GKDS…IPVS. A phosphoserine mark is found at serine 918 and serine 924. WD repeat units lie at residues 968-1010, 1134-1175, and 1211-1251; these read PSAG…GESA, SNTK…VQDQ, and GSPP…EPVI. Phosphoserine occurs at positions 1830, 1896, 1908, and 1970. Disordered regions lie at residues 2367–2412 and 2446–2468; these read PSKE…SSAP and SRAE…DDDD. A compositionally biased stretch (acidic residues) spans 2451 to 2468; it reads DSEESLGSDDDDNDDDDD. WD repeat units follow at residues 2742 to 2783, 2785 to 2824, 2836 to 2878, 2884 to 2923, 2926 to 2965, and 2978 to 3016; these read KAIN…TCFR, GGNS…CPVT, CHNK…ANSL, CHDS…QRQL, SHDS…LLHT, and NIGT…SPLN.

In terms of tissue distribution, expressed in bone, breast, eye, foreskin, heart, parathyroid, small intestine, testis, tonsils, placenta and uterus.

The polypeptide is DmX-like protein 1 (DMXL1) (Homo sapiens (Human)).